The sequence spans 191 residues: MTQQITLVKDKILSDNYFTLHNITYDLTRKDGEVIRHKREVYDRGNGATILLYNAKKKTVVLIRQFRVATWVNGNESGQLIETCAGLLDNDEPEVCIRKEAIEETGYEVGEVRKLFELYMSPGGVTELIHFFIAEYSDSQRANAGGGVEDEDIEVLELPFSQALEMIKTGEIRDGKTVLLLNYLQMSHLMD.

Residues Y17, 38–40, R67, and 85–87 each bind GDP-alpha-D-mannose; these read KRE and AGL. Positions 43-180 constitute a Nudix hydrolase domain; sequence DRGNGATILL…EIRDGKTVLL (138 aa). 3 residues coordinate Mg(2+): A85, E100, and E104. The Nudix box motif lies at 86–106; the sequence is GLLDNDEPEVCIRKEAIEETG. GDP-alpha-D-mannose is bound by residues E104, E127, 150 to 151, and K176; that span reads DE. A Mg(2+)-binding site is contributed by E151.

This sequence belongs to the Nudix hydrolase family. NudK subfamily. As to quaternary structure, homodimer. Mg(2+) serves as cofactor.

The enzyme catalyses GDP-alpha-D-mannose + H2O = alpha-D-mannose 1-phosphate + GMP + 2 H(+). Its function is as follows. Nucleoside diphosphate sugar hydrolase that hydrolyzes GDP-mannose as its preferred substrate, yielding GMP and mannose-1-phosphate. This is GDP-mannose pyrophosphatase (nudK) from Escherichia coli (strain UTI89 / UPEC).